A 316-amino-acid chain; its full sequence is Short-chain dehydrogenase/reductase family 16C member 6 (316 aa).

Residue 40-64 (LITGAASGLGRLLAIKFASLGAILV) participates in NAD(+) binding. Serine 173 serves as a coordination point for substrate. Catalysis depends on tyrosine 186, which acts as the Proton acceptor.

It belongs to the short-chain dehydrogenases/reductases (SDR) family.

The sequence is that of Short-chain dehydrogenase/reductase family 16C member 6 (SDR16C6) from Bos taurus (Bovine).